Reading from the N-terminus, the 262-residue chain is Cell division protein FtsQ (262 aa).

The Cytoplasmic segment spans residues 1–20; sequence MSWSDKRRHWRARKSQVNWY. The chain crosses the membrane as a helical span at residues 21 to 41; that stretch reads LWSGIGFLSLVIGSFVFGGYL. At 42-262 the chain is on the periplasmic side; it reads LHKFLNDAST…EPIINDEKPR (221 aa). A POTRA domain is found at 52-121; sequence LPIEAVAIKG…AKLRVYLQEQ (70 aa).

It belongs to the FtsQ/DivIB family. FtsQ subfamily. Part of a complex composed of FtsB, FtsL and FtsQ.

Its subcellular location is the cell inner membrane. In terms of biological role, essential cell division protein. May link together the upstream cell division proteins, which are predominantly cytoplasmic, with the downstream cell division proteins, which are predominantly periplasmic. May control correct divisome assembly. The sequence is that of Cell division protein FtsQ from Shewanella oneidensis (strain ATCC 700550 / JCM 31522 / CIP 106686 / LMG 19005 / NCIMB 14063 / MR-1).